The sequence spans 293 residues: Elongation factor Ts (293 aa).

The tract at residues 80–83 is involved in Mg(2+) ion dislocation from EF-Tu; it reads TDFV.

Belongs to the EF-Ts family.

The protein resides in the cytoplasm. Associates with the EF-Tu.GDP complex and induces the exchange of GDP to GTP. It remains bound to the aminoacyl-tRNA.EF-Tu.GTP complex up to the GTP hydrolysis stage on the ribosome. This Aeromonas salmonicida (strain A449) protein is Elongation factor Ts.